The chain runs to 566 residues: DDB1- and CUL4-associated factor 10 (566 aa).

Disordered stretches follow at residues 1–72 (MFPF…AERA) and 87–123 (TASA…GAGL). Ser-50, Ser-57, Ser-67, Ser-96, Ser-99, and Ser-100 each carry phosphoserine. Over residues 87-100 (TASASQAKLSPSSS) the composition is skewed to low complexity. Position 141 is an omega-N-methylarginine (Arg-141). WD repeat units lie at residues 173–212 (RTHG…HIKT), 216–254 (AHED…TKVC), 258–297 (GHTS…EDGC), and 303–342 (FHTR…KSLE). A compositionally biased stretch (low complexity) spans 354 to 374 (TTSSSDLTTTSSSSGSRVSGS). Residues 354–413 (TTSSSDLTTTSSSSGSRVSGSPCHHNDSNSTEKHMSRASQREGVSPRNSLEVLTPEVPGE) are disordered. The residue at position 356 (Ser-356) is a Phosphoserine. Basic and acidic residues predominate over residues 377-388 (HHNDSNSTEKHM). WD repeat units follow at residues 415-455 (DRGN…QEGA), 477-515 (VGRG…SELV), and 533-566 (SHND…QPKF).

The protein belongs to the WD repeat DCAF10 family. As to quaternary structure, interacts with DDB1.

Its pathway is protein modification; protein ubiquitination. May function as a substrate receptor for CUL4-DDB1 E3 ubiquitin-protein ligase complex. The protein is DDB1- and CUL4-associated factor 10 (Dcaf10) of Mus musculus (Mouse).